A 301-amino-acid polypeptide reads, in one-letter code: Phosphatidylglycerol--prolipoprotein diacylglyceryl transferase (301 aa).

The next 4 helical transmembrane spans lie at 10-30, 57-77, 92-112, and 119-139; these read IAFS…LAGF, LLFY…MLFY, VWEG…AVAW, and MHMF…LGFG. R140 is an a 1,2-diacyl-sn-glycero-3-phospho-(1'-sn-glycerol) binding site. A run of 3 helical transmembrane segments spans residues 202–222, 230–250, and 264–284; these read PSQL…LWLF, YAVS…VEFV, and LTRG…LFWL.

The protein belongs to the Lgt family.

The protein localises to the cell inner membrane. The enzyme catalyses L-cysteinyl-[prolipoprotein] + a 1,2-diacyl-sn-glycero-3-phospho-(1'-sn-glycerol) = an S-1,2-diacyl-sn-glyceryl-L-cysteinyl-[prolipoprotein] + sn-glycerol 1-phosphate + H(+). The protein operates within protein modification; lipoprotein biosynthesis (diacylglyceryl transfer). Its function is as follows. Catalyzes the transfer of the diacylglyceryl group from phosphatidylglycerol to the sulfhydryl group of the N-terminal cysteine of a prolipoprotein, the first step in the formation of mature lipoproteins. This chain is Phosphatidylglycerol--prolipoprotein diacylglyceryl transferase, found in Xylella fastidiosa (strain M12).